Consider the following 319-residue polypeptide: Putative binding protein BAB2_1146 (319 aa).

The N-terminal stretch at 1-22 (MKRRTFLAMSLALTFLPSVALA) is a signal peptide.

This sequence belongs to the bacterial solute-binding protein SsuA/TauA family. The complex is composed of two ATP-binding proteins (BAB2_1147), two transmembrane proteins (BAB2_1148) and a solute-binding protein (BAB2_1146).

Its subcellular location is the periplasm. Probably part of an ABC transporter complex. The protein is Putative binding protein BAB2_1146 of Brucella abortus (strain 2308).